The sequence spans 209 residues: Uridine kinase (209 aa).

Residue 12–19 coordinates ATP; that stretch reads GGSGSGKT.

This sequence belongs to the uridine kinase family.

The protein localises to the cytoplasm. It carries out the reaction uridine + ATP = UMP + ADP + H(+). It catalyses the reaction cytidine + ATP = CMP + ADP + H(+). It functions in the pathway pyrimidine metabolism; CTP biosynthesis via salvage pathway; CTP from cytidine: step 1/3. The protein operates within pyrimidine metabolism; UMP biosynthesis via salvage pathway; UMP from uridine: step 1/1. The polypeptide is Uridine kinase (Listeria monocytogenes serotype 4b (strain CLIP80459)).